The primary structure comprises 514 residues: Beta-glucosidase 16 (514 aa).

A signal peptide spans 1–21 (MRGKFLSLLLLITLACIGVSA). Gln-49 contributes to the a beta-D-glucoside binding site. Residue Asn-80 is glycosylated (N-linked (GlcNAc...) asparagine). A beta-D-glucoside contacts are provided by residues His-153 and 198–199 (NE). The active-site Proton donor is the Glu-199. The cysteines at positions 218 and 226 are disulfide-linked. Tyr-343 provides a ligand contact to a beta-D-glucoside. Asn-357 is a glycosylation site (N-linked (GlcNAc...) asparagine). A beta-D-glucoside contacts are provided by residues Glu-413, Trp-458, 465–466 (EW), and Phe-474. Glu-413 serves as the catalytic Nucleophile.

The protein belongs to the glycosyl hydrolase 1 family. As to expression, expressed at low levels in cauline leaves and flowers.

It catalyses the reaction Hydrolysis of terminal, non-reducing beta-D-glucosyl residues with release of beta-D-glucose.. The protein is Beta-glucosidase 16 of Arabidopsis thaliana (Mouse-ear cress).